The sequence spans 326 residues: Tetraacyldisaccharide 4'-kinase (326 aa).

53 to 60 (SVGGNGKT) contributes to the ATP binding site.

Belongs to the LpxK family.

The catalysed reaction is a lipid A disaccharide + ATP = a lipid IVA + ADP + H(+). It participates in glycolipid biosynthesis; lipid IV(A) biosynthesis; lipid IV(A) from (3R)-3-hydroxytetradecanoyl-[acyl-carrier-protein] and UDP-N-acetyl-alpha-D-glucosamine: step 6/6. Transfers the gamma-phosphate of ATP to the 4'-position of a tetraacyldisaccharide 1-phosphate intermediate (termed DS-1-P) to form tetraacyldisaccharide 1,4'-bis-phosphate (lipid IVA). The chain is Tetraacyldisaccharide 4'-kinase from Actinobacillus pleuropneumoniae serotype 5b (strain L20).